A 321-amino-acid polypeptide reads, in one-letter code: Beta-1,3-N-acetylglucosaminyltransferase manic fringe (321 aa).

At 1 to 7 (MQCRLPR) the chain is on the cytoplasmic side. A helical; Signal-anchor for type II membrane protein membrane pass occupies residues 8–27 (GLAGALLTLLCMGLLCLRYH). The Lumenal segment spans residues 28–321 (LNLSPQRVQE…TPWCPQLGAR (294 aa)). Arg70 provides a ligand contact to substrate. Residue Asn109 is glycosylated (N-linked (GlcNAc...) asparagine). Disulfide bonds link Cys110–Cys121 and Cys139–Cys202. Asp143 serves as a coordination point for substrate. Asp144 provides a ligand contact to Mn(2+). A glycan (N-linked (GlcNAc...) asparagine) is linked at Asn185. Asp232 is an active-site residue. His256 lines the Mn(2+) pocket. The cysteines at positions 306 and 315 are disulfide-linked.

The protein belongs to the glycosyltransferase 31 family. Requires Mn(2+) as cofactor.

It is found in the golgi apparatus membrane. It catalyses the reaction 3-O-(alpha-L-fucosyl)-L-threonyl-[EGF-like domain protein] + UDP-N-acetyl-alpha-D-glucosamine = 3-O-(N-acetyl-beta-D-glucosaminyl-(1-&gt;3)-alpha-L-fucosyl)-L-threonyl-[EGF-like domain protein] + UDP + H(+). It carries out the reaction 3-O-(alpha-L-fucosyl)-L-seryl-[EGF-like domain protein] + UDP-N-acetyl-alpha-D-glucosamine = 3-O-(N-acetyl-beta-D-glucosaminyl-(1-&gt;3)-alpha-L-fucosyl)-L-seryl-[EGF-like domain protein] + UDP + H(+). Functionally, glycosyltransferase that initiates the elongation of O-linked fucose residues attached to EGF-like repeats in the extracellular domain of Notch molecules. Modulates NOTCH1 activity by modifying O-fucose residues at specific EGF-like domains resulting in inhibition of NOTCH1 activation by JAG1 and enhancement of NOTCH1 activation by DLL1 via an increase in its binding to DLL1. The polypeptide is Beta-1,3-N-acetylglucosaminyltransferase manic fringe (MFNG) (Pan troglodytes (Chimpanzee)).